The chain runs to 151 residues: Ubiquitin-like protein 4A-B (151 aa).

Positions 1-76 constitute a Ubiquitin-like domain; the sequence is MILTIKPLKG…LNLVVRPAGE (76 aa).

In terms of assembly, component of the BAT3 complex.

The protein localises to the cytoplasm. It localises to the cytosol. In terms of biological role, component of the BAT3 complex, a multiprotein complex involved in the post-translational delivery of tail-anchored (TA) membrane proteins to the endoplasmic reticulum membrane. TA membrane proteins, also named type II transmembrane proteins, contain a single C-terminal transmembrane region. The chain is Ubiquitin-like protein 4A-B (ubl4ab) from Oncorhynchus mykiss (Rainbow trout).